A 553-amino-acid polypeptide reads, in one-letter code: Cytochrome P450 86A2 (553 aa).

Residues 2 to 20 traverse the membrane as a helical segment; that stretch reads DVSNTMLLVAVVAAYWLWF. C459 is a binding site for heme.

It belongs to the cytochrome P450 family. Requires heme as cofactor. As to expression, expressed in leaves, stems, flowers and siliques. Expressed at low levels in roots. Expressed in guard cells of cotyledons and leaves.

The protein resides in the membrane. It catalyses the reaction an organic molecule + reduced [NADPH--hemoprotein reductase] + O2 = an alcohol + oxidized [NADPH--hemoprotein reductase] + H2O + H(+). Catalyzes the omega-hydroxylation of various fatty acids (FA). Acts on saturated and unsaturated fatty acids with chain lengths from C12 to C18. Plays a major role in the biosynthesis of extracellular lipids. Involved in the biosynthesis of hydroxylated fatty acids required for cutin biosynthesis, cuticle development and repression of bacterial type III gene expression. This is Cytochrome P450 86A2 (CYP86A2) from Arabidopsis thaliana (Mouse-ear cress).